An 801-amino-acid polypeptide reads, in one-letter code: MTTVHDLSSDTMTTAADRAARAIPPVWPLASSVAVNPFLGQTEEHLAQVSARLGRIGNVPVTMPPAHYAALIEDGTITDDDIASASAASRIDNAPDLAEIKRSAAVPFDRPEPHSTIADLAARMSGIDWPGILADRFGHWASGFFDQGQALWAAPRRRGAYDAWRQTATHDLTPEITGLTGFAQFVSETPDTAQEARLRAAKRLGLDDDMLETYLHQLLFSLGGWAQVARYHLWQAELSQTTDETIADLLTIRLLWEEALFLQYEDRIGDRWEATKTAHAQPVTPQRGEIINAILQEAWEHAVQRDLASTIAAPSPERGEDRPTLQAAFCIDVRSEVFRRALEAVNPGIQTLGFAGFFGLTASHKSFASDVDELRLPVLLNAGVTSTSTGENVTAEQTARFKARAKRAWGRFKLAAVSSFAFVEATGPIYAGKLVRDALNIGSDPHDYGPAPVLDPPLPLDAQIDAAETILRAMSLTTDFAPLVVLAGHGANVVNNPFASGLHCGACGGYAGDVNARLLAALLNTPDVRAGLADRGIDVPSDTLFLGALHDTTTDAITLFAKDHPSAAHDAGIAQAETWFAQAGTVTRAERALRLPRADGDADVDLRSRDWAETRPEWALAGCKAFIAAPRHRTAGKSLAGRAFLHDYDWKKDSDFSVLELIMTAPVVVASWISLQYYGSTVAPDVFGSGNKLLHNVTGGIGVVEGNGGTLRAGLPWQSVHEGEGYAHDPLRLSVCIEAPREAMTDILRRHDGVRALFDNRWLHLFALDASGQMAWRYTGDLEWSEMARDARISDDLDAAG.

The Zn(2+) site is built by cysteine 330, aspartate 332, histidine 489, and cysteine 504.

The protein belongs to the inorganic carbon transporter (TC 9.A.2) DabA family. In terms of assembly, forms a complex with DabB. It depends on Zn(2+) as a cofactor.

It is found in the cell inner membrane. Its function is as follows. Part of an energy-coupled inorganic carbon pump. In Jannaschia sp. (strain CCS1), this protein is Probable inorganic carbon transporter subunit DabA.